The following is a 550-amino-acid chain: Hydroxylamine reductase (550 aa).

4 residues coordinate [2Fe-2S] cluster: cysteine 3, cysteine 6, cysteine 18, and cysteine 25. Residues histidine 249, glutamate 273, cysteine 317, cysteine 405, cysteine 433, cysteine 458, glutamate 492, and lysine 494 each contribute to the hybrid [4Fe-2O-2S] cluster site. Cysteine persulfide is present on cysteine 405.

This sequence belongs to the HCP family. [2Fe-2S] cluster serves as cofactor. The cofactor is hybrid [4Fe-2O-2S] cluster.

It is found in the cytoplasm. It catalyses the reaction A + NH4(+) + H2O = hydroxylamine + AH2 + H(+). In terms of biological role, catalyzes the reduction of hydroxylamine to form NH(3) and H(2)O. This is Hydroxylamine reductase from Shigella flexneri serotype 5b (strain 8401).